The primary structure comprises 162 residues: Selenoprotein F (162 aa).

The signal sequence occupies residues 1 to 28 (MAAGQGGWLRPALGLRLLLATAFQAVSA). Sec93 is a non-standard amino acid (selenocysteine).

The protein belongs to the selenoprotein M/F family. Forms a tight complex with UGGT1/UGCGL1. Interacts with UGGT2/UGCGL2. Interacts with RDH11.

The protein resides in the endoplasmic reticulum lumen. Its function is as follows. May be involved in redox reactions associated with the formation of disulfide bonds. May contribute to the quality control of protein folding in the endoplasmic reticulum. May regulate protein folding by enhancing the catalytic activity of UGGT1/UGCGL1 and UGGT2/UGCGL2. The chain is Selenoprotein F from Mus musculus (Mouse).